The chain runs to 22 residues: Caerin-3.5 (22 aa).

The residue at position 22 (lysine 22) is a Lysine amide.

As to expression, expressed by the skin dorsal glands.

Its subcellular location is the secreted. In terms of biological role, shows significant activity against Gram-positive organisms, but is less effective against Gram-negative organisms. The chain is Caerin-3.5 from Ranoidea gracilenta (Dainty green tree frog).